The chain runs to 464 residues: 3-isopropylmalate dehydratase large subunit (464 aa).

3 residues coordinate [4Fe-4S] cluster: Cys-337, Cys-397, and Cys-400.

The protein belongs to the aconitase/IPM isomerase family. LeuC type 1 subfamily. Heterodimer of LeuC and LeuD. [4Fe-4S] cluster serves as cofactor.

The enzyme catalyses (2R,3S)-3-isopropylmalate = (2S)-2-isopropylmalate. Its pathway is amino-acid biosynthesis; L-leucine biosynthesis; L-leucine from 3-methyl-2-oxobutanoate: step 2/4. Catalyzes the isomerization between 2-isopropylmalate and 3-isopropylmalate, via the formation of 2-isopropylmaleate. This chain is 3-isopropylmalate dehydratase large subunit, found in Bacillus cereus (strain G9842).